A 215-amino-acid chain; its full sequence is 3,4-dihydroxy-2-butanone 4-phosphate synthase (215 aa).

D-ribulose 5-phosphate contacts are provided by residues 38-39 (RE), Asp43, 151-155 (RRGHT), and Glu175. Glu39 contributes to the Mg(2+) binding site. Mg(2+) is bound at residue His154.

This sequence belongs to the DHBP synthase family. Homodimer. It depends on Mg(2+) as a cofactor. The cofactor is Mn(2+).

It carries out the reaction D-ribulose 5-phosphate = (2S)-2-hydroxy-3-oxobutyl phosphate + formate + H(+). Its pathway is cofactor biosynthesis; riboflavin biosynthesis; 2-hydroxy-3-oxobutyl phosphate from D-ribulose 5-phosphate: step 1/1. Its function is as follows. Catalyzes the conversion of D-ribulose 5-phosphate to formate and 3,4-dihydroxy-2-butanone 4-phosphate. This chain is 3,4-dihydroxy-2-butanone 4-phosphate synthase, found in Haemophilus influenzae (strain PittEE).